We begin with the raw amino-acid sequence, 131 residues long: uncharacterized protein (131 aa).

The next 3 membrane-spanning stretches (helical) occupy residues 13-35 (RFIK…TFPI), 60-79 (LVAL…TYVC), and 100-119 (LFEI…WNIT).

The protein localises to the membrane. This is an uncharacterized protein from Saccharomyces cerevisiae (strain ATCC 204508 / S288c) (Baker's yeast).